Reading from the N-terminus, the 144-residue chain is Ribosome-binding factor A (144 aa).

A disordered region spans residues 120-144 (DKRRMAEAGREEDEAAPDDTTEDKA). The segment covering 129-144 (REEDEAAPDDTTEDKA) has biased composition (acidic residues).

Belongs to the RbfA family. As to quaternary structure, monomer. Binds 30S ribosomal subunits, but not 50S ribosomal subunits or 70S ribosomes.

It is found in the cytoplasm. Functionally, one of several proteins that assist in the late maturation steps of the functional core of the 30S ribosomal subunit. Associates with free 30S ribosomal subunits (but not with 30S subunits that are part of 70S ribosomes or polysomes). Required for efficient processing of 16S rRNA. May interact with the 5'-terminal helix region of 16S rRNA. The sequence is that of Ribosome-binding factor A from Aeromonas salmonicida (strain A449).